The primary structure comprises 72 residues: Aurein-2.2 (72 aa).

Positions 1–22 (MAFLKKSLFLVLFLGLVSLSIC) are cleaved as a signal peptide. Positions 23 to 49 (EKEKRQNEEDEDENEAANHEEGSEEKR) are excised as a propeptide. Residues 27-47 (RQNEEDEDENEAANHEEGSEE) form a disordered region. Residues 38 to 47 (AANHEEGSEE) are compositionally biased toward basic and acidic residues. Residue Leu-65 is modified to Leucine amide. Residues 69–72 (NDLE) constitute a propeptide that is removed on maturation.

In terms of processing, amidation is essential for antibacterial activity against Gram-positive bacteria. In terms of tissue distribution, expressed by the skin dorsal glands.

It localises to the secreted. The protein localises to the target cell membrane. Amphipathic alpha-helical antimicrobial peptide with weak to moderate activity against Gram-positive bacteria, and no activity against Gram-negative bacteria. Probably acts by disturbing membrane functions with its amphipathic structure. Strongly inhibits the formation of NO by neuronal nitric oxide synthase (nNOS) at micromolar concentrations. Acts by a non-competitive mechanism, probably by binding to calcium/calmodulin and as a consequence blocking calmodulin attachment to nNOS. In Ranoidea aurea (Green and golden bell frog), this protein is Aurein-2.2.